The primary structure comprises 238 residues: Protein shisa-3 homolog (238 aa).

An N-terminal signal peptide occupies residues 1–21 (MRALLALCLLLGWLRWGPAGA). Over 22-98 (QQSGEYCHGW…GITAQPVYVP (77 aa)) the chain is Lumenal. A helical transmembrane segment spans residues 99-119 (FLIVGSIFIAFIILGSVVAIY). The Cytoplasmic segment spans residues 120–238 (CCTCLRPKEP…GKSCPDFSSS (119 aa)). The tract at residues 151-173 (TSTSPRAPSRQSSTATSSSSTGG) is disordered. Low complexity predominate over residues 159 to 173 (SRQSSTATSSSSTGG).

This sequence belongs to the shisa family.

The protein resides in the endoplasmic reticulum membrane. In terms of biological role, plays an essential role in the maturation of presomitic mesoderm cells by individual attenuation of both FGF and WNT signaling. In Homo sapiens (Human), this protein is Protein shisa-3 homolog (SHISA3).